Consider the following 573-residue polypeptide: Sulfite reductase [NADPH] hemoprotein beta-component (573 aa).

[4Fe-4S] cluster-binding residues include cysteine 438, cysteine 444, cysteine 483, and cysteine 487. Residue cysteine 487 coordinates siroheme.

This sequence belongs to the nitrite and sulfite reductase 4Fe-4S domain family. As to quaternary structure, alpha(8)-beta(8). The alpha component is a flavoprotein, the beta component is a hemoprotein. Siroheme is required as a cofactor. The cofactor is [4Fe-4S] cluster.

It catalyses the reaction hydrogen sulfide + 3 NADP(+) + 3 H2O = sulfite + 3 NADPH + 4 H(+). Its pathway is sulfur metabolism; hydrogen sulfide biosynthesis; hydrogen sulfide from sulfite (NADPH route): step 1/1. In terms of biological role, component of the sulfite reductase complex that catalyzes the 6-electron reduction of sulfite to sulfide. This is one of several activities required for the biosynthesis of L-cysteine from sulfate. The protein is Sulfite reductase [NADPH] hemoprotein beta-component of Nitrosomonas europaea (strain ATCC 19718 / CIP 103999 / KCTC 2705 / NBRC 14298).